A 480-amino-acid polypeptide reads, in one-letter code: Flotillin-like protein 2 (480 aa).

A lipid anchor (S-palmitoyl cysteine) is attached at cysteine 37. Positions 237–257 form a coiled coil; it reads ENQREAEVAQANSELAKKKAA.

This sequence belongs to the band 7/mec-2 family. Flotillin subfamily. In terms of processing, may be palmitoylated. In terms of tissue distribution, expressed in flowers in green pods. Primarily expressed in vascular tissues. Upon induction of nodulation, expansion of expression in the root cortex in the region of elongating root hairs, which will eventually become colonized by bacteria. Expressed in the infection zone in nodules.

The protein localises to the cell membrane. Its subcellular location is the membrane. It localises to the caveola. Its function is as follows. May act as a scaffolding protein within caveolar membranes, functionally participating in formation of caveolae or caveolae-like vesicles. Required for early symbiotic events and nodules formation. The protein is Flotillin-like protein 2 (FLOT2) of Medicago truncatula (Barrel medic).